A 352-amino-acid polypeptide reads, in one-letter code: Chorismate synthase (352 aa).

Residue Arg48 coordinates NADP(+). Residues 125–127, 238–239, Gly278, 293–297, and Arg319 contribute to the FMN site; these read RSS, NA, and KPTSS.

The protein belongs to the chorismate synthase family. In terms of assembly, homotetramer. It depends on FMNH2 as a cofactor.

The enzyme catalyses 5-O-(1-carboxyvinyl)-3-phosphoshikimate = chorismate + phosphate. Its pathway is metabolic intermediate biosynthesis; chorismate biosynthesis; chorismate from D-erythrose 4-phosphate and phosphoenolpyruvate: step 7/7. Functionally, catalyzes the anti-1,4-elimination of the C-3 phosphate and the C-6 proR hydrogen from 5-enolpyruvylshikimate-3-phosphate (EPSP) to yield chorismate, which is the branch point compound that serves as the starting substrate for the three terminal pathways of aromatic amino acid biosynthesis. This reaction introduces a second double bond into the aromatic ring system. The polypeptide is Chorismate synthase (Legionella pneumophila subsp. pneumophila (strain Philadelphia 1 / ATCC 33152 / DSM 7513)).